Consider the following 946-residue polypeptide: Protein dct-6 (946 aa).

Positions Tyr-326–Gln-363 form a coiled coil.

Its function is as follows. May have a role in tumor suppression. The chain is Protein dct-6 from Caenorhabditis briggsae.